Here is a 313-residue protein sequence, read N- to C-terminus: Glyoxylate/hydroxypyruvate reductase A (313 aa).

R228 is a catalytic residue. The active-site Proton donor is H276.

This sequence belongs to the D-isomer specific 2-hydroxyacid dehydrogenase family. GhrA subfamily.

It localises to the cytoplasm. The enzyme catalyses glycolate + NADP(+) = glyoxylate + NADPH + H(+). It carries out the reaction (R)-glycerate + NAD(+) = 3-hydroxypyruvate + NADH + H(+). It catalyses the reaction (R)-glycerate + NADP(+) = 3-hydroxypyruvate + NADPH + H(+). Functionally, catalyzes the NADPH-dependent reduction of glyoxylate and hydroxypyruvate into glycolate and glycerate, respectively. This is Glyoxylate/hydroxypyruvate reductase A from Yersinia enterocolitica serotype O:8 / biotype 1B (strain NCTC 13174 / 8081).